The following is a 139-amino-acid chain: Small ribosomal subunit protein uS12 (139 aa).

Residue aspartate 102 is modified to 3-methylthioaspartic acid.

Belongs to the universal ribosomal protein uS12 family. Part of the 30S ribosomal subunit. Contacts proteins S8 and S17. May interact with IF1 in the 30S initiation complex.

With S4 and S5 plays an important role in translational accuracy. In terms of biological role, interacts with and stabilizes bases of the 16S rRNA that are involved in tRNA selection in the A site and with the mRNA backbone. Located at the interface of the 30S and 50S subunits, it traverses the body of the 30S subunit contacting proteins on the other side and probably holding the rRNA structure together. The combined cluster of proteins S8, S12 and S17 appears to hold together the shoulder and platform of the 30S subunit. The chain is Small ribosomal subunit protein uS12 from Mycoplasma capricolum subsp. capricolum (strain California kid / ATCC 27343 / NCTC 10154).